The sequence spans 252 residues: CD99 antigen-like protein 2 (252 aa).

A signal peptide spans 1 to 23; that stretch reads MEKTLWTWTLLAVFSLLVVKGMS. The interval 30–170 is disordered; the sequence is DALGDDDDDE…DLDPADDNNY (141 aa). The span at 57 to 68 shows a compositional bias: low complexity; it reads AAVKPTLKPVKP. Over residues 96 to 120 the composition is skewed to basic and acidic residues; it reads NDIKGKGKDSGKGDKEVGGGSRDDG. A helical transmembrane segment spans residues 178 to 198; that stretch reads TIAGIVSAVAMALVGAVSSYI.

This sequence belongs to the CD99 family.

It localises to the cell membrane. The protein localises to the cell junction. Functionally, may function as a homophilic adhesion molecule. This is CD99 antigen-like protein 2 (cd99l2) from Danio rerio (Zebrafish).